A 365-amino-acid polypeptide reads, in one-letter code: Peptide chain release factor 2 (365 aa).

At Gln251 the chain carries N5-methylglutamine.

It belongs to the prokaryotic/mitochondrial release factor family. Post-translationally, methylated by PrmC. Methylation increases the termination efficiency of RF2.

It is found in the cytoplasm. Peptide chain release factor 2 directs the termination of translation in response to the peptide chain termination codons UGA and UAA. This is Peptide chain release factor 2 from Neorickettsia sennetsu (strain ATCC VR-367 / Miyayama) (Ehrlichia sennetsu).